We begin with the raw amino-acid sequence, 222 residues long: Large ribosomal subunit protein mL64 (222 aa).

2 disordered regions span residues 14 to 40 (LTAT…PWWP) and 188 to 222 (KRLK…APSS). Residues 144 to 213 (EKAQADKERR…AALAAAAAQD (70 aa)) adopt a coiled-coil conformation. Residues 184 to 200 (KKERKRLKEEKQRQKQE) carry the Nuclear localization signal motif. Over residues 188 to 201 (KRLKEEKQRQKQEA) the composition is skewed to basic and acidic residues. The segment covering 202–216 (RAAALAAAAAQDPAA) has biased composition (low complexity).

This sequence belongs to the mitochondrion-specific ribosomal protein mL64 family. In terms of assembly, component of the mitochondrial ribosome large subunit (39S) which comprises a 16S rRNA and about 50 distinct proteins. Interacts with GADD45A, GADD45B and GADD45G. Interacts with NR4A1 via the NR4A1 AB domain. Interacts with ATAD3A and ATAD3B.

The protein localises to the mitochondrion. The protein resides in the nucleus. Functionally, acts as a negative regulator of G1 to S cell cycle phase progression by inhibiting cyclin-dependent kinases. Inhibitory effects are additive with GADD45 proteins but also occur in the absence of GADD45 proteins. Acts as a repressor of the orphan nuclear receptor NR4A1 by inhibiting AB domain-mediated transcriptional activity. May be involved in the hormone-mediated regulation of NR4A1 transcriptional activity. May play a role in mitochondrial protein synthesis. The protein is Large ribosomal subunit protein mL64 (GADD45GIP1) of Chlorocebus aethiops (Green monkey).